A 268-amino-acid polypeptide reads, in one-letter code: Octanoyltransferase (268 aa).

The BPL/LPL catalytic domain maps to 47-243 (PETPDQVWLV…ALCEVLAAHE (197 aa)). Residues 87-94 (RGGQITYH), 159-161 (ALG), and 172-174 (GVS) each bind substrate. Cys-190 functions as the Acyl-thioester intermediate in the catalytic mechanism.

Belongs to the LipB family.

The protein localises to the cytoplasm. It catalyses the reaction octanoyl-[ACP] + L-lysyl-[protein] = N(6)-octanoyl-L-lysyl-[protein] + holo-[ACP] + H(+). Its pathway is protein modification; protein lipoylation via endogenous pathway; protein N(6)-(lipoyl)lysine from octanoyl-[acyl-carrier-protein]: step 1/2. In terms of biological role, catalyzes the transfer of endogenously produced octanoic acid from octanoyl-acyl-carrier-protein onto the lipoyl domains of lipoate-dependent enzymes. Lipoyl-ACP can also act as a substrate although octanoyl-ACP is likely to be the physiological substrate. The polypeptide is Octanoyltransferase (Cupriavidus necator (strain ATCC 17699 / DSM 428 / KCTC 22496 / NCIMB 10442 / H16 / Stanier 337) (Ralstonia eutropha)).